Here is a 128-residue protein sequence, read N- to C-terminus: Mu-like prophage FluMu protein gp35 (128 aa).

The tract at residues 53 to 87 (TETGSQEGGEGLSKEPAGSDEQKQLRADPPSTDLN) is disordered.

It to phage Mu protein gp35. As to quaternary structure, monomer.

The protein is Mu-like prophage FluMu protein gp35 of Haemophilus influenzae (strain ATCC 51907 / DSM 11121 / KW20 / Rd).